The sequence spans 48 residues: Palustrin-3a (48 aa).

Residues cysteine 43 and cysteine 48 are joined by a disulfide bond.

In terms of tissue distribution, expressed by the skin glands.

It is found in the secreted. Its function is as follows. Antimicrobial activity against Gram-negative bacterium E.coli. The chain is Palustrin-3a from Lithobates palustris (Pickerel frog).